A 59-amino-acid chain; its full sequence is Cuticle protein 7 isoform a (59 aa).

A Pyrrolidone carboxylic acid modification is found at glutamine 1.

This chain is Cuticle protein 7 isoform a, found in Limulus polyphemus (Atlantic horseshoe crab).